A 384-amino-acid polypeptide reads, in one-letter code: GDSL esterase/lipase ENOD8 (384 aa).

The N-terminal stretch at methionine 1–alanine 31 is a signal peptide. Serine 46 serves as the catalytic Nucleophile. N-linked (GlcNAc...) asparagine glycans are attached at residues asparagine 105, asparagine 191, asparagine 198, asparagine 276, and asparagine 330. Active-site residues include aspartate 349 and histidine 352.

This sequence belongs to the 'GDSL' lipolytic enzyme family. Expressed in root nodules (at protein level).

The protein localises to the symbiosome. In terms of biological role, has lipase and esterase activities. Probably involved in root nodule physiology. This is GDSL esterase/lipase ENOD8 from Medicago truncatula (Barrel medic).